We begin with the raw amino-acid sequence, 432 residues long: Maltoporin (432 aa).

The signal sequence occupies residues 1-22 (MKKVSVIAAAVAATLAAGSAFA).

Belongs to the porin LamB (TC 1.B.3) family. In terms of assembly, homotrimer formed of three 18-stranded antiparallel beta-barrels, containing three independent channels.

The protein localises to the cell outer membrane. It catalyses the reaction beta-maltose(in) = beta-maltose(out). Its function is as follows. Involved in the transport of maltose and maltodextrins. The chain is Maltoporin from Vibrio parahaemolyticus serotype O3:K6 (strain RIMD 2210633).